A 586-amino-acid polypeptide reads, in one-letter code: Estrogen receptor (586 aa).

Positions 1-179 (MTMPLPNKTT…SMESTKETRY (179 aa)) are modulating. The disordered stretch occupies residues 144 to 173 (FYRSSSDNRRQSGRERMSSANDKGPPSMES). Positions 149 to 160 (SDNRRQSGRERM) are enriched in basic and acidic residues. 2 NR C4-type zinc fingers span residues 180–200 (CAVC…CEGC) and 216–240 (CPAT…LRKC). A DNA-binding region (nuclear receptor) is located at residues 180–245 (CAVCSDYASG…RLRKCYEVGM (66 aa)). The hinge stretch occupies residues 246-302 (MKGGIRKDRRGGRLLKHKRQKEEQEQKNDVDPSEIRTASIWVNPSVKSMKLSPVLSL). Over residues 252 to 264 (KDRRGGRLLKHKR) the composition is skewed to basic residues. Residues 252–276 (KDRRGGRLLKHKRQKEEQEQKNDVD) are disordered. Residues 265 to 276 (QKEEQEQKNDVD) are compositionally biased toward basic and acidic residues. The NR LBD domain maps to 303 to 539 (TAEQLISALM…DLLLEMLDAH (237 aa)). Residues 543–556 (TPKDKTTTQEEDSR) are compositionally biased toward basic and acidic residues. The disordered stretch occupies residues 543 to 569 (TPKDKTTTQEEDSRSPPTTTVNGASPC).

The protein belongs to the nuclear hormone receptor family. NR3 subfamily. In terms of assembly, binds DNA as a homodimer. Can form a heterodimer with ER-beta.

The protein localises to the nucleus. In terms of biological role, the steroid hormones and their receptors are involved in the regulation of eukaryotic gene expression and affect cellular proliferation and differentiation in target tissues. In Xenopus laevis (African clawed frog), this protein is Estrogen receptor (esr1).